Here is a 633-residue protein sequence, read N- to C-terminus: FAD-binding monooxygenase andJ (633 aa).

FAD contacts are provided by residues 117–120 (TWYW), 129–130 (DT), and Tyr-135. 127–129 (MCD) is an NADP(+) binding site. NADP(+) contacts are provided by residues 269 to 275 (TGASAVQ) and 292 to 293 (RT).

Belongs to the FAD-binding monooxygenase family. FAD serves as cofactor.

It participates in secondary metabolite biosynthesis; terpenoid biosynthesis. Its function is as follows. FAD-binding monooxygenase; part of the gene cluster that mediates the biosynthesis of anditomin, a fungal meroterpenoid. The first step of the pathway is the synthesis of 3,5-dimethylorsellinic acid (DMOA) by the polyketide synthase andM. DMOA is then converted to the phthalide compound 5,7-dihydroxy-4,6-dimethylphthalide (DHDMP) by the cytochrome P450 monooxygenase andK, which is further prenylated by the prenyltransferase andD to yield farnesyl-DHDMP. Further epoxidation by the FAD-dependent monooxygenase andE leads to epoxyfarnesyl-DHDMP. The next step involves the terpene cyclase andB that converts epoxyfarnesyl-DHDMP into preandiloid A through opening of the epoxide ring followed by the cyclization of the farnesyl moiety. Preandiloid A is in turn oxidized at the C-3 hydroxyl group to yield preandiloid B by the dehydrogenase andC. The dioxygenase andA is solely responsible for the dehydrogenation of preandiloid B leading to the enone preandiloid C, as well as for the intriguing structural rearrangement to generate the bicyclo[2.2.2]octane core, transforming preandiloid C into andiconin. FAD-binding monooxygenase andJ then produces andilesin D which is reduced by dehydrogenase andI to yield andilesin A. Action of acetyltransferase andG followed by a spontaneous acetate elimination leads then to andilesin B, which is in turn substrate of the short chain dehydrogenase andH to yield andilesin C. Finally, the dioxygenase andF catalyzes the transformation of andilesin C to anditomin. This is FAD-binding monooxygenase andJ from Emericella variicolor (Aspergillus stellatus).